A 461-amino-acid chain; its full sequence is pre-mRNA splicing regulator USH1G (461 aa).

ANK repeat units follow at residues 31 to 60 (DGMT…DPDK), 64 to 93 (WGNT…NIWC), and 97 to 126 (DYHT…KQSS). The interval 329-368 (LGREDGGLDGAGTPRGRLHSSPSLDDDSLGSANSLQDRSC) is disordered. Positions 385–447 (LEPETSPLET…KILGAVRRRR (63 aa)) constitute an SAM domain. Ser-422 bears the Phosphoserine mark.

As to quaternary structure, part of a complex composed of USH1C, USH1G and MYO7A. Interacts with USH1C (via the first PDZ domain). Interacts with PDZD7. Interacts with CDH23 and PCDH15; these interactions may recruit USH1G to the plasma membrane. Interacts with intraflagellar transport proteins IFT20, IFT52 and IFT57. Interacts with splicing factors SF3B1, PRPF6, PRPF31 and SON. Interacts with the U4/U6.U5 tri-small nuclear ribonucleoprotein (tri-snRNP) complex in the presence of pre-mRNAs. Interacts (via SAM domain) with MAGI2 (via PDZ 6 domain); the interaction is triggered by phosphorylation of USH1G by CK2 and negatively regulates MAGI2-mediated endocytosis. Detected in stereocilia from cochlear hair cells (at protein level). Detected in retinal photoreceptor cell cilia (at protein level). Highly expressed in the cochlea, testis, cerebellum and eye, and low levels in brain, thymus and spleen. Significant signals detected in the neurosensory epithelium of inner ear cochlea and saccule, especially in inner and outer hair cells.

It is found in the cytoplasm. It localises to the cytosol. The protein resides in the cytoskeleton. The protein localises to the cell membrane. Its subcellular location is the cell projection. It is found in the cilium. It localises to the nucleus speckle. The protein resides in the nucleus. The protein localises to the cajal body. Its subcellular location is the microtubule organizing center. It is found in the centrosome. It localises to the photoreceptor inner segment. Its function is as follows. Plays a role in pre-mRNA splicing by regulating the release and transfer of U4/U6.U5 tri-small nuclear ribonucleoprotein (tri-snRNP) complexes from their assembly site in Cajal bodies to nuclear speckles, thereby contributing to the assembly of the pre-catalytic spliceosome on target pre-mRNAs. May also participate in recycling of snRNPs back to Cajal bodies during splicing. Plays a role in regulating MAGI2-mediated endocytosis. Anchoring/scaffolding protein that is a part of the functional network formed by USH1C, USH1G, CDH23 and MYO7A that mediates mechanotransduction in cochlear hair cells. Required for normal development and maintenance of cochlear hair cell bundles. Required for normal hearing. This Mus musculus (Mouse) protein is pre-mRNA splicing regulator USH1G (Ush1g).